A 517-amino-acid chain; its full sequence is Anthranilate--CoA ligase (517 aa).

AMP is bound at residue 161–172; sequence LQYTSGSTGAPK.

It belongs to the ATP-dependent AMP-binding enzyme family. In terms of assembly, monomer.

It catalyses the reaction anthranilate + ATP + CoA = anthraniloyl-CoA + AMP + diphosphate. Its function is as follows. Catalyzes the formation of anthraniloyl-CoA, which is the priming step for entry into the Pseudomonas quinolone signal (PQS) biosynthetic pathway. Also active on a variety of aromatic substrates, including benzoate and chloro and fluoro derivatives of anthranilate. The polypeptide is Anthranilate--CoA ligase (pqsA) (Pseudomonas aeruginosa (strain ATCC 15692 / DSM 22644 / CIP 104116 / JCM 14847 / LMG 12228 / 1C / PRS 101 / PAO1)).